The primary structure comprises 476 residues: Glutamyl-tRNA(Gln) amidotransferase subunit A (476 aa).

Active-site charge relay system residues include K69 and S144. S168 serves as the catalytic Acyl-ester intermediate.

This sequence belongs to the amidase family. GatA subfamily. As to quaternary structure, heterotrimer of A, B and C subunits.

The catalysed reaction is L-glutamyl-tRNA(Gln) + L-glutamine + ATP + H2O = L-glutaminyl-tRNA(Gln) + L-glutamate + ADP + phosphate + H(+). In terms of biological role, allows the formation of correctly charged Gln-tRNA(Gln) through the transamidation of misacylated Glu-tRNA(Gln) in organisms which lack glutaminyl-tRNA synthetase. The reaction takes place in the presence of glutamine and ATP through an activated gamma-phospho-Glu-tRNA(Gln). In Sulfolobus acidocaldarius (strain ATCC 33909 / DSM 639 / JCM 8929 / NBRC 15157 / NCIMB 11770), this protein is Glutamyl-tRNA(Gln) amidotransferase subunit A.